Reading from the N-terminus, the 222-residue chain is Probable pyridoxal 5'-phosphate synthase subunit SNO3 (222 aa).

58 to 60 (GES) serves as a coordination point for L-glutamine. The active-site Nucleophile is Cys91. L-glutamine contacts are provided by residues Arg120 and 151–152 (IR). Catalysis depends on charge relay system residues His197 and Glu199.

It belongs to the glutaminase PdxT/SNO family.

It carries out the reaction aldehydo-D-ribose 5-phosphate + D-glyceraldehyde 3-phosphate + L-glutamine = pyridoxal 5'-phosphate + L-glutamate + phosphate + 3 H2O + H(+). The catalysed reaction is L-glutamine + H2O = L-glutamate + NH4(+). It functions in the pathway cofactor biosynthesis; pyridoxal 5'-phosphate biosynthesis. Its function is as follows. Catalyzes the hydrolysis of glutamine to glutamate and ammonia as part of the biosynthesis of pyridoxal 5'-phosphate. The resulting ammonia molecule is channeled to the active site of a SNZ isoform. The chain is Probable pyridoxal 5'-phosphate synthase subunit SNO3 (SNO3) from Saccharomyces cerevisiae (strain ATCC 204508 / S288c) (Baker's yeast).